A 259-amino-acid polypeptide reads, in one-letter code: Proteasome subunit alpha (259 aa).

Low complexity predominate over residues 233-243 (PAAPAAASESA). A disordered region spans residues 233 to 259 (PAAPAAASESAPEPKPDTETKPADPQD). The segment covering 244 to 259 (PEPKPDTETKPADPQD) has biased composition (basic and acidic residues).

This sequence belongs to the peptidase T1A family. As to quaternary structure, the 20S proteasome core is composed of 14 alpha and 14 beta subunits that assemble into four stacked heptameric rings, resulting in a barrel-shaped structure. The two inner rings, each composed of seven catalytic beta subunits, are sandwiched by two outer rings, each composed of seven alpha subunits. The catalytic chamber with the active sites is on the inside of the barrel. Has a gated structure, the ends of the cylinder being occluded by the N-termini of the alpha-subunits. Is capped by the proteasome-associated ATPase, ARC.

Its subcellular location is the cytoplasm. The protein operates within protein degradation; proteasomal Pup-dependent pathway. Its activity is regulated as follows. The formation of the proteasomal ATPase ARC-20S proteasome complex, likely via the docking of the C-termini of ARC into the intersubunit pockets in the alpha-rings, may trigger opening of the gate for substrate entry. Interconversion between the open-gate and close-gate conformations leads to a dynamic regulation of the 20S proteasome proteolysis activity. Component of the proteasome core, a large protease complex with broad specificity involved in protein degradation. The protein is Proteasome subunit alpha of Rhodococcus opacus (strain B4).